Here is a 512-residue protein sequence, read N- to C-terminus: Glucose-6-phosphate 1-dehydrogenase (512 aa).

NADP(+)-binding positions include Arg-61, 103–104 (EF), and Lys-171. Positions 201, 205, 239, and 258 each coordinate substrate. The Proton acceptor role is filled by His-263. The substrate site is built by Lys-360 and Lys-365. Positions 479 to 512 (QDSSPSFPNYPAGSSGPKEADALIERDGRSWRPL) are disordered. The segment covering 496–512 (KEADALIERDGRSWRPL) has biased composition (basic and acidic residues).

The protein belongs to the glucose-6-phosphate dehydrogenase family.

The catalysed reaction is D-glucose 6-phosphate + NADP(+) = 6-phospho-D-glucono-1,5-lactone + NADPH + H(+). The protein operates within carbohydrate degradation; pentose phosphate pathway; D-ribulose 5-phosphate from D-glucose 6-phosphate (oxidative stage): step 1/3. Functionally, catalyzes the oxidation of glucose 6-phosphate to 6-phosphogluconolactone. The chain is Glucose-6-phosphate 1-dehydrogenase from Chlamydia pneumoniae (Chlamydophila pneumoniae).